The chain runs to 449 residues: Phosphoglucosamine mutase (449 aa).

Ser101 acts as the Phosphoserine intermediate in catalysis. Mg(2+) contacts are provided by Ser101, Asp241, Asp243, and Asp245. Ser101 is modified (phosphoserine).

This sequence belongs to the phosphohexose mutase family. Requires Mg(2+) as cofactor. Post-translationally, activated by phosphorylation.

It catalyses the reaction alpha-D-glucosamine 1-phosphate = D-glucosamine 6-phosphate. Catalyzes the conversion of glucosamine-6-phosphate to glucosamine-1-phosphate. The protein is Phosphoglucosamine mutase of Alkaliphilus oremlandii (strain OhILAs) (Clostridium oremlandii (strain OhILAs)).